The chain runs to 235 residues: ATP-dependent Clp protease proteolytic subunit (235 aa).

The Nucleophile role is filled by Ser123. Residue His148 is part of the active site.

Belongs to the peptidase S14 family. Fourteen ClpP subunits assemble into 2 heptameric rings which stack back to back to give a disk-like structure with a central cavity, resembling the structure of eukaryotic proteasomes.

Its subcellular location is the cytoplasm. The enzyme catalyses Hydrolysis of proteins to small peptides in the presence of ATP and magnesium. alpha-casein is the usual test substrate. In the absence of ATP, only oligopeptides shorter than five residues are hydrolyzed (such as succinyl-Leu-Tyr-|-NHMec, and Leu-Tyr-Leu-|-Tyr-Trp, in which cleavage of the -Tyr-|-Leu- and -Tyr-|-Trp bonds also occurs).. Its function is as follows. Cleaves peptides in various proteins in a process that requires ATP hydrolysis. Has a chymotrypsin-like activity. Plays a major role in the degradation of misfolded proteins. The sequence is that of ATP-dependent Clp protease proteolytic subunit from Novosphingobium aromaticivorans (strain ATCC 700278 / DSM 12444 / CCUG 56034 / CIP 105152 / NBRC 16084 / F199).